The following is a 53-amino-acid chain: Lantibiotic paenibacillin (53 aa).

Residues 1-24 (MKVDQMFDLDLRKSYEASELSPQA) constitute a propeptide that is removed on maturation. Ala24 carries the post-translational modification N-acetylalanine. A 2,3-didehydroalanine (Ser) modification is found at Ser25. 2,3-didehydrobutyrine is present on residues Thr29 and Thr30. The lanthionine (Ser-Cys) cross-link spans 34–38 (SKAVC). 3 consecutive cross-links (beta-methyllanthionine (Thr-Cys)) follow at residues 40–43 (TLTC), 42–45 (TCIC), and 46–49 (TGSC). The lanthionine (Ser-Cys) cross-link spans 48 to 52 (SCSNC). Ser50 carries the post-translational modification 2,3-didehydroalanine (Ser).

Maturation of lantibiotics involves the enzymatic conversion of Thr, and Ser into dehydrated AA and the formation of thioether bonds with cysteine. This is followed by membrane translocation and cleavage of the modified precursor. In terms of processing, the structure of the 2,3-didehydrobutyrines is not discussed in PubMed:17071789.

It localises to the secreted. Its function is as follows. Lanthionine-containing peptide antibiotic (lantibiotic) active on Gram-positive bacteria. The bactericidal activity of lantibiotics is based on depolarization of energized bacterial cytoplasmic membranes, initiated by the formation of aqueous transmembrane pores. Lacks antibacterial activity against Gram-negative bacteria. The polypeptide is Lantibiotic paenibacillin (Paenibacillus polymyxa (Bacillus polymyxa)).